A 385-amino-acid polypeptide reads, in one-letter code: MEALFCSEIPNNNIRSSINDLSSSSSYTWPMIMTSSSSSSSSPTIMNIENIPRCDWDLSLSAVVSSASTGSDAIGAIEFDPTGEIIATGGIARKIRSYRLSSLLESRDDHVTASESYICTPAKLSSLKWRPDFSGRVIGSGDYDGVVTEYDVEKQVPVSERDEHGGRRIWSVDYTLYNGSLIGASGSDDGTVQMWDPRNGGTLEETVRPGGGAAICSVEFDPFGGSSIAVGCADRNAYVYDIRRLVDPLIVLDGHTKTVTYARFMDSHTIVTGSTDGSLKQWDIDNGRRVVRTYRGHVNSRNFVGLSVWRHGGLVVSGSENNQVFVYDKRWEEPVWVCGLGHTNRFGSDRRFVSSVCLRQVDEDWCTLVAGGSDGALEIFSGKQS.

WD repeat units follow at residues 69 to 108, 119 to 160, 163 to 205, 210 to 250, 254 to 292, 298 to 337, and 348 to 385; these read TGSD…ESRD, CTPA…PVSE, EHGG…TLEE, GGGA…DPLI, GHTK…RVVR, VNSR…PVWV, and SDRR…GKQS.

In terms of assembly, interacts with UVR8. Interacts directly with DHU1.

The protein resides in the nucleus. The protein localises to the cytoplasm. It is found in the cytosol. In terms of biological role, functions in association with RUP2 as repressor of UV-B-induced photomorphogenesis mediated by UVR8 and HY5, likely in coordination with DHU1. Plays a crucial negative feedback regulatory role downstream of UVR8-COP1 to inhibit UVR8 function, balance UV-B-specific responses and ensure normal plant growth. Is involved in the regulation of photoperiodic flowering and vegetative development. This chain is WD repeat-containing protein RUP1, found in Arabidopsis thaliana (Mouse-ear cress).